Reading from the N-terminus, the 62-residue chain is Translational regulator CsrA (62 aa).

Belongs to the CsrA/RsmA family. As to quaternary structure, homodimer; the beta-strands of each monomer intercalate to form a hydrophobic core, while the alpha-helices form wings that extend away from the core.

It is found in the cytoplasm. A key translational regulator that binds mRNA to regulate translation initiation and/or mRNA stability. Mediates global changes in gene expression, shifting from rapid growth to stress survival by linking envelope stress, the stringent response and the catabolite repression systems. Usually binds in the 5'-UTR; binding at or near the Shine-Dalgarno sequence prevents ribosome-binding, repressing translation, binding elsewhere in the 5'-UTR can activate translation and/or stabilize the mRNA. Its function is antagonized by small RNA(s). The polypeptide is Translational regulator CsrA (Pasteurella multocida (strain Pm70)).